The sequence spans 288 residues: Ankyrin repeat and SOCS box protein 8 (288 aa).

Ser-17 carries the post-translational modification Phosphoserine. 4 ANK repeats span residues 52-81, 85-113, 117-146, and 150-179; these read GTLKPLHCACMVSDADCVELLLEKGAEVNA, YNRTALHYAAEKDEACVEVLLEYGANPNA, NRDTPLHWAAFKNNAECVRALLESGASVNA, and NNDTPLSWAAMKGNLESVSILLDYGAEVRV. Residues 235-288 form the SOCS box domain; the sequence is QLCEKLTVLCSAPGTLKTLSRYAVRRSLGLQYLPDAVKGLPLPASLKEYLLLIE.

It belongs to the ankyrin SOCS box (ASB) family. In terms of assembly, interacts with TBK1; this interaction promotes TBK1 proteasomal degradation. In terms of processing, phosphorylated by TBK1.

It localises to the cytoplasm. Its pathway is protein modification; protein ubiquitination. May be a substrate-recognition component of a SCF-like ECS (Elongin-Cullin-SOCS-box protein) E3 ubiquitin-protein ligase complex which mediates the ubiquitination and subsequent proteasomal degradation of target proteins. Inhibits IFN-beta production through the IRF3 signaling pathway by targeting TBK1 via 'Lys-48'-linked ubiquitination, leading to its proteasomal degradation. The sequence is that of Ankyrin repeat and SOCS box protein 8 (ASB8) from Bos taurus (Bovine).